The following is a 266-amino-acid chain: 3-methyl-2-oxobutanoate hydroxymethyltransferase (266 aa).

Positions 45 and 84 each coordinate Mg(2+). 3-methyl-2-oxobutanoate contacts are provided by residues 45 to 46, aspartate 84, and lysine 112; that span reads DS. Residue glutamate 114 coordinates Mg(2+). Residue glutamate 181 is the Proton acceptor of the active site.

Belongs to the PanB family. Homodecamer; pentamer of dimers. Requires Mg(2+) as cofactor.

The protein localises to the cytoplasm. It carries out the reaction 3-methyl-2-oxobutanoate + (6R)-5,10-methylene-5,6,7,8-tetrahydrofolate + H2O = 2-dehydropantoate + (6S)-5,6,7,8-tetrahydrofolate. It participates in cofactor biosynthesis; (R)-pantothenate biosynthesis; (R)-pantoate from 3-methyl-2-oxobutanoate: step 1/2. Its function is as follows. Catalyzes the reversible reaction in which hydroxymethyl group from 5,10-methylenetetrahydrofolate is transferred onto alpha-ketoisovalerate to form ketopantoate. This Pseudomonas fluorescens (strain SBW25) protein is 3-methyl-2-oxobutanoate hydroxymethyltransferase.